Consider the following 339-residue polypeptide: DNA-directed RNA polymerase subunit alpha (339 aa).

The tract at residues 1 to 233 (MVREEVAGST…DLFLPFLHAE (233 aa)) is alpha N-terminal domain (alpha-NTD). Residues 264–339 (KKGIPLNCIF…IDLLKNKLSF (76 aa)) are alpha C-terminal domain (alpha-CTD).

It belongs to the RNA polymerase alpha chain family. In terms of assembly, in plastids the minimal PEP RNA polymerase catalytic core is composed of four subunits: alpha, beta, beta', and beta''. When a (nuclear-encoded) sigma factor is associated with the core the holoenzyme is formed, which can initiate transcription.

The protein localises to the plastid. It localises to the chloroplast. It catalyses the reaction RNA(n) + a ribonucleoside 5'-triphosphate = RNA(n+1) + diphosphate. DNA-dependent RNA polymerase catalyzes the transcription of DNA into RNA using the four ribonucleoside triphosphates as substrates. This is DNA-directed RNA polymerase subunit alpha from Agropyron cristatum (Crested wheatgrass).